The sequence spans 151 residues: Acidic phospholipase A2 6 (151 aa).

A signal peptide spans 1 to 27 (MYPAHLLVLLAVCVSLLGAASIPARPL). 7 disulfides stabilise this stretch: Cys38/Cys104, Cys54/Cys151, Cys56/Cys72, Cys71/Cys132, Cys78/Cys125, Cys88/Cys118, and Cys111/Cys123. Ca(2+) is bound by residues Tyr55, Gly57, and Gly59. Residue His75 is part of the active site. Ca(2+) is bound at residue Asp76. Asp126 is a catalytic residue.

This sequence belongs to the phospholipase A2 family. Group I subfamily. D49 sub-subfamily. Ca(2+) is required as a cofactor. As to expression, expressed by the venom gland.

It is found in the secreted. It catalyses the reaction a 1,2-diacyl-sn-glycero-3-phosphocholine + H2O = a 1-acyl-sn-glycero-3-phosphocholine + a fatty acid + H(+). Its function is as follows. PLA2 catalyzes the calcium-dependent hydrolysis of the 2-acyl groups in 3-sn-phosphoglycerides. This Tropidechis carinatus (Australian rough-scaled snake) protein is Acidic phospholipase A2 6.